The sequence spans 406 residues: Renin (406 aa).

The N-terminal stretch at 1–23 is a signal peptide; the sequence is MDGWRRMPRWGLLLLLWGSCTFG. A propeptide spans 24–66 (activation peptide); the sequence is LPTDTTTFKRIFLKRMPSIRESLKERGVDMARLGPEWSQPMKR. Asn-71 carries N-linked (GlcNAc...) asparagine glycosylation. The 318-residue stretch at 86 to 403 folds into the Peptidase A1 domain; it reads YYGEIGIGTP…DRRNNRIGFA (318 aa). Asp-104 is an active-site residue. An intrachain disulfide couples Cys-117 to Cys-124. A glycan (N-linked (GlcNAc...) asparagine) is linked at Asn-141. Cys-283 and Cys-287 are joined by a disulfide. Asp-292 is an active-site residue. The cysteines at positions 325 and 362 are disulfide-linked.

This sequence belongs to the peptidase A1 family. As to quaternary structure, interacts with ATP6AP2.

The protein localises to the secreted. Its subcellular location is the membrane. It catalyses the reaction Cleavage of Leu-|-Xaa bond in angiotensinogen to generate angiotensin I.. Its activity is regulated as follows. Interaction with ATP6AP2 results in a 5-fold increased efficiency in angiotensinogen processing. Renin is a highly specific endopeptidase, whose only known function is to generate angiotensin I from angiotensinogen in the plasma, initiating a cascade of reactions that produce an elevation of blood pressure and increased sodium retention by the kidney. The polypeptide is Renin (REN) (Macaca mulatta (Rhesus macaque)).